The chain runs to 101 residues: Apolipoprotein C-II (101 aa).

Positions 1–22 (MGTRFLLALFLVLLVLGFEVQG) are cleaved as a signal peptide. The interval 66–74 (AVDEKLRDM) is lipid binding. The lipoprotein lipase cofactor stretch occupies residues 78–101 (STAAVSTYAGIFTDQVLSMLRGEE).

It belongs to the apolipoprotein C2 family. Proapolipoprotein C-II is synthesized as a sialic acid containing glycoprotein which is subsequently desialylated prior to its proteolytic processing. Post-translationally, proapolipoprotein C-II, the major form found in plasma undergoes proteolytic cleavage of its N-terminal hexapeptide to generate apolipoprotein C-II, which occurs as the minor form in plasma.

It localises to the secreted. Its function is as follows. Component of chylomicrons, very low-density lipoproteins (VLDL), low-density lipoproteins (LDL), and high-density lipoproteins (HDL) in plasma. Plays an important role in lipoprotein metabolism as an activator of lipoprotein lipase. Both proapolipoprotein C-II and apolipoprotein C-II can activate lipoprotein lipase. This Saimiri boliviensis boliviensis (Bolivian squirrel monkey) protein is Apolipoprotein C-II (APOC2).